Reading from the N-terminus, the 363-residue chain is Phospho-N-acetylmuramoyl-pentapeptide-transferase (363 aa).

The next 9 helical transmembrane spans lie at 13 to 33, 49 to 69, 95 to 115, 119 to 139, 154 to 174, 183 to 203, 224 to 244, 281 to 301, and 343 to 363; these read ISGIALASLLAVGLGTTAFFL, LPLLLCAMGSGVVGFWVIPLL, MGGIFFIPVGVIIACILSNFA, LAVSALTTSYGFIGWLDDWQI, LALQVGFAAVFCLWLMFNQPS, WVSFTLPLGFLFWPLAGFVLV, AIALLALGALIAPTAPGLMVF, AVALLTNTLVALFILSGIFFV, and ELQVVGVFYVIAAILAAICLA.

The protein belongs to the glycosyltransferase 4 family. MraY subfamily. Mg(2+) is required as a cofactor.

It localises to the cell inner membrane. The catalysed reaction is UDP-N-acetyl-alpha-D-muramoyl-L-alanyl-gamma-D-glutamyl-meso-2,6-diaminopimeloyl-D-alanyl-D-alanine + di-trans,octa-cis-undecaprenyl phosphate = di-trans,octa-cis-undecaprenyl diphospho-N-acetyl-alpha-D-muramoyl-L-alanyl-D-glutamyl-meso-2,6-diaminopimeloyl-D-alanyl-D-alanine + UMP. It functions in the pathway cell wall biogenesis; peptidoglycan biosynthesis. In terms of biological role, catalyzes the initial step of the lipid cycle reactions in the biosynthesis of the cell wall peptidoglycan: transfers peptidoglycan precursor phospho-MurNAc-pentapeptide from UDP-MurNAc-pentapeptide onto the lipid carrier undecaprenyl phosphate, yielding undecaprenyl-pyrophosphoryl-MurNAc-pentapeptide, known as lipid I. In Nostoc punctiforme (strain ATCC 29133 / PCC 73102), this protein is Phospho-N-acetylmuramoyl-pentapeptide-transferase.